The chain runs to 400 residues: Multidrug resistance protein MdtH (400 aa).

A run of 10 helical transmembrane segments spans residues 13–33, 34–54, 99–116, 139–159, 165–185, 214–234, 244–264, 289–309, 340–360, and 365–385; these read YFLL…FPLI, SIRF…ALGL, PWIL…GTLF, LLLM…SWLL, LVCW…AWLL, VLTL…FPIV, AVKW…YPIA, FPVG…LFYL, LGLA…YDIG, and LPEL…YALH.

This sequence belongs to the major facilitator superfamily. DHA1 family. MdtH (TC 2.A.1.2.21) subfamily.

It localises to the cell inner membrane. This Proteus mirabilis (strain HI4320) protein is Multidrug resistance protein MdtH.